A 131-amino-acid polypeptide reads, in one-letter code: D-ribose pyranase (131 aa).

His-20 serves as the catalytic Proton donor. Substrate is bound by residues Asp-28, His-98, and 120–122 (YAN).

The protein belongs to the RbsD / FucU family. RbsD subfamily. Homodecamer.

The protein localises to the cytoplasm. It carries out the reaction beta-D-ribopyranose = beta-D-ribofuranose. The protein operates within carbohydrate metabolism; D-ribose degradation; D-ribose 5-phosphate from beta-D-ribopyranose: step 1/2. In terms of biological role, catalyzes the interconversion of beta-pyran and beta-furan forms of D-ribose. This is D-ribose pyranase from Bacillus cytotoxicus (strain DSM 22905 / CIP 110041 / 391-98 / NVH 391-98).